Here is a 186-residue protein sequence, read N- to C-terminus: Protein SPMIP2 (186 aa).

The tract at residues 163–186 (SSLPRASKPPKLPKLPKKEKKRKH) is disordered. The span at 176–186 (KLPKKEKKRKH) shows a compositional bias: basic residues.

The chain is Protein SPMIP2 from Homo sapiens (Human).